The chain runs to 428 residues: G2/mitotic-specific cyclin-B (428 aa).

This sequence belongs to the cyclin family. Cyclin AB subfamily. In terms of assembly, interacts with the CDC2 protein kinase to form a serine/threonine kinase holoenzyme complex also known as maturation promoting factor (MPF). The cyclin subunit imparts substrate specificity to the complex.

In terms of biological role, essential for the control of the cell cycle at the G2/M (mitosis) transition. The sequence is that of G2/mitotic-specific cyclin-B from Spisula solidissima (Atlantic surf-clam).